We begin with the raw amino-acid sequence, 336 residues long: Glycerol-3-phosphate dehydrogenase [NAD(P)+] (336 aa).

Residues Ser11, Trp12, Arg32, and Lys106 each coordinate NADPH. Lys106 and Gly136 together coordinate sn-glycerol 3-phosphate. Residue Ala140 participates in NADPH binding. 5 residues coordinate sn-glycerol 3-phosphate: Lys191, Asp244, Ser254, Arg255, and Asn256. The active-site Proton acceptor is the Lys191. Arg255 is a binding site for NADPH. 2 residues coordinate NADPH: Val279 and Glu281.

This sequence belongs to the NAD-dependent glycerol-3-phosphate dehydrogenase family.

The protein resides in the cytoplasm. It carries out the reaction sn-glycerol 3-phosphate + NAD(+) = dihydroxyacetone phosphate + NADH + H(+). The enzyme catalyses sn-glycerol 3-phosphate + NADP(+) = dihydroxyacetone phosphate + NADPH + H(+). The protein operates within membrane lipid metabolism; glycerophospholipid metabolism. Catalyzes the reduction of the glycolytic intermediate dihydroxyacetone phosphate (DHAP) to sn-glycerol 3-phosphate (G3P), the key precursor for phospholipid synthesis. The polypeptide is Glycerol-3-phosphate dehydrogenase [NAD(P)+] (Frankia casuarinae (strain DSM 45818 / CECT 9043 / HFP020203 / CcI3)).